Reading from the N-terminus, the 944-residue chain is Trehalose monomycolate exporter MmpL3 (944 aa).

The Cytoplasmic segment spans residues 1–13; sequence MFAWWGRTVYRYR. Residues 14 to 34 traverse the membrane as a helical segment; the sequence is FIVIGVMVALCLGGGVFGLSL. The Periplasmic portion of the chain corresponds to 35 to 185; sequence GKHVTQSGFY…TIATDQRRME (151 aa). Position 40–44 (40–44) interacts with a 1,2-diacylglycero-3-phosphoethanolamine; it reads QSGFY. Residues 186–206 traverse the membrane as a helical segment; the sequence is VLALPLVAVVLFFVFGGVIAA. Residues 207-209 are Cytoplasmic-facing; that stretch reads GLP. A helical membrane pass occupies residues 210 to 230; it reads VMVGGLCIAGALGIMRFLAIF. The Periplasmic portion of the chain corresponds to 231-235; that stretch reads GPVHY. The chain crosses the membrane as a helical span at residues 236-256; the sequence is FAQPVVSLIGLGIAIDYGLFI. Residues 257–286 are Cytoplasmic-facing; the sequence is VSRFREEIAEGYDTETAVRRTVITAGRTVT. A helical membrane pass occupies residues 287–307; that stretch reads FSAVLIVASAIGLLLFPQGFL. At 308–314 the chain is on the periplasmic side; that stretch reads KSLTYAT. The chain crosses the membrane as a helical span at residues 315 to 335; sequence IASVMLSAILSITVLPACLGI. Residues 336–396 are Cytoplasmic-facing; it reads LGKHVDALGV…KLVNRVMKRP (61 aa). A helical transmembrane segment spans residues 397-417; the sequence is VLFAAPIVIIMILLIIPVGKL. Over 418–562 the chain is Periplasmic; that stretch reads SLGGISEKYL…HGLFAKMPLM (145 aa). A helical transmembrane segment spans residues 563–583; that stretch reads VVILLTTTIVLMFLAFGSVVL. Residues 584–586 lie on the Cytoplasmic side of the membrane; it reads PIK. Residues 587–607 traverse the membrane as a helical segment; the sequence is ATLMSALTLGSTMGILTWIFV. At 608 to 616 the chain is on the periplasmic side; sequence DGHFSKWLN. Residues 617-637 form a helical membrane-spanning segment; it reads FTPTPLTAPVIGLIIALVFGL. Residues 638–672 lie on the Cytoplasmic side of the membrane; that stretch reads STDYEVFLVSRMVEARERGMSTQEAIRIGTAATGR. The helical transmembrane segment at 673–693 threads the bilayer; it reads IITAAALIVAVVAGAFVFSDL. Topologically, residues 694-698 are periplasmic; it reads VMMKY. The helical transmembrane segment at 699–719 threads the bilayer; sequence LAFGLMAALLLDATVVRMFLV. Over 720–944 the chain is Cytoplasmic; the sequence is PSVMKLLGDD…QDLLRREGRL (225 aa). The tract at residues 778–944 is disordered; it reads AAGDPRPPHD…QDLLRREGRL (167 aa). The segment covering 791-828 has biased composition (low complexity); that stretch reads PLAESPRPARSSPASSPELTPALEATAAPAAPSGASTT. A compositionally biased stretch (polar residues) spans 829-839; that stretch reads RMQIGSSTEPP. A compositionally biased stretch (pro residues) spans 855–866; it reads STPPPTPTPPSA.

Belongs to the resistance-nodulation-cell division (RND) (TC 2.A.6) family. MmpL subfamily. As to quaternary structure, monomer. Interacts with TtfA (via N-terminus); active trehalose monomycolate (TMM) biosynthesis is not required for the complex formation.

Its subcellular location is the cell inner membrane. The protein localises to the cell septum. It is found in the cell tip. Functionally, transports trehalose monomycolate (TMM) to the cell wall. Flips TMM across the inner membrane. Membrane potential is not required for this function. Transports probably phosphatidylethanolamine (PE) as well. Binds specifically both TMM and PE, but not trehalose dimycolate (TDM). Also binds diacylglycerol (DAG) and other phospholipids, including phosphatidylglycerol (PG), phosphatidylinositol (PI), and cardiolipin (CDL). Contributes to membrane potential, cell wall composition, antibiotic susceptibility and fitness. Could also be part of a heme-iron acquisition system. The protein is Trehalose monomycolate exporter MmpL3 (mmpL3) of Mycobacterium tuberculosis (strain CDC 1551 / Oshkosh).